The sequence spans 431 residues: Urokinase-type plasminogen activator (431 aa).

Residues 1–20 (MRALLARLLLCVLVVSDSKG) form the signal peptide. Positions 27-63 (VPSNCDCLNGGTCVSNKYFSNIHWCNCPKKFGGQHCE) constitute an EGF-like domain. Intrachain disulfides connect cysteine 31/cysteine 39, cysteine 33/cysteine 51, cysteine 53/cysteine 62, cysteine 70/cysteine 151, cysteine 91/cysteine 133, and cysteine 122/cysteine 146. The interval 34-57 (LNGGTCVSNKYFSNIHWCNCPKKF) is binds urokinase plasminogen activator surface receptor. O-linked (Fuc) threonine glycosylation is present at threonine 38. A Kringle domain is found at 70 to 151 (CYEGNGHFYR…LVQECMVHDC (82 aa)). The segment at 152 to 177 (ADGKKPSSPPEELKFQCGQKTLRPRF) is connecting peptide. Serine 158 is modified (phosphoserine). 6 disulfides stabilise this stretch: cysteine 168-cysteine 299, cysteine 209-cysteine 225, cysteine 217-cysteine 288, cysteine 313-cysteine 382, cysteine 345-cysteine 361, and cysteine 372-cysteine 400. A Peptidase S1 domain is found at 179 to 424 (IIGGEFTTIE…FLPWIRSHTK (246 aa)). Catalysis depends on charge relay system residues histidine 224 and aspartate 275. The N-linked (GlcNAc...) asparagine glycan is linked to asparagine 322. Serine 323 bears the Phosphoserine mark. Serine 376 serves as the catalytic Charge relay system.

Belongs to the peptidase S1 family. Found in high and low molecular mass forms. Each consists of two chains, A and B. The high molecular mass form contains a long chain A which is cleaved to yield a short chain A. Forms heterodimer with SERPINA5. Binds LRP1B; binding is followed by internalization and degradation. Interacts with MRC2. Interacts with PLAUR. In complex with SERPINE1, interacts with PLAUR/uPAR. Interacts with SORL1 and LRP1, either alone or in complex with SERPINE1; these interactions are abolished in the presence of LRPAP1/RAP. The ternary complex composed of PLAUR-PLAU-PAI1 also interacts with SORLA. Phosphorylation of Ser-158 and Ser-323 abolishes proadhesive ability but does not interfere with receptor binding. In terms of processing, produced as an inactive single-chain protein (pro-uPA or sc-uPA), is processed into the active disulfide-linked two-chain form of PLAU/uPA by a proteolytic event mediated, at least, by TMPRSS4. Expressed in the prostate gland and prostate cancers.

It is found in the secreted. It catalyses the reaction Specific cleavage of Arg-|-Val bond in plasminogen to form plasmin.. Its activity is regulated as follows. Inhibited by SERPINA5. Inhibited by SERPINE1. Its function is as follows. Specifically cleaves the zymogen plasminogen to form the active enzyme plasmin. The sequence is that of Urokinase-type plasminogen activator from Homo sapiens (Human).